A 323-amino-acid polypeptide reads, in one-letter code: o-succinylbenzoate synthase (323 aa).

The Proton donor role is filled by Lys134. Mg(2+)-binding residues include Asp162, Glu191, and Asp214. The active-site Proton acceptor is Lys236.

It belongs to the mandelate racemase/muconate lactonizing enzyme family. MenC type 1 subfamily. A divalent metal cation serves as cofactor.

The enzyme catalyses (1R,6R)-6-hydroxy-2-succinyl-cyclohexa-2,4-diene-1-carboxylate = 2-succinylbenzoate + H2O. It functions in the pathway quinol/quinone metabolism; 1,4-dihydroxy-2-naphthoate biosynthesis; 1,4-dihydroxy-2-naphthoate from chorismate: step 4/7. Its pathway is quinol/quinone metabolism; menaquinone biosynthesis. In terms of biological role, converts 2-succinyl-6-hydroxy-2,4-cyclohexadiene-1-carboxylate (SHCHC) to 2-succinylbenzoate (OSB). This chain is o-succinylbenzoate synthase, found in Proteus mirabilis (strain HI4320).